Here is a 187-residue protein sequence, read N- to C-terminus: Ponticulin-like protein K (187 aa).

The N-terminal stretch at 1–19 (MKNLILLFLLISIINLIQS) is a signal peptide. 9 N-linked (GlcNAc...) asparagine glycosylation sites follow: asparagine 31, asparagine 70, asparagine 86, asparagine 93, asparagine 119, asparagine 128, asparagine 146, asparagine 160, and asparagine 161. Over residues 115-146 (PSPSNSSNPSPSPNTTSSSSLSSSSLNSNEPN) the composition is skewed to low complexity. A disordered region spans residues 115–161 (PSPSNSSNPSPSPNTTSSSSLSSSSLNSNEPNQTTKPPKTNEPQKNN). Over residues 147–161 (QTTKPPKTNEPQKNN) the composition is skewed to polar residues. Asparagine 161 carries the GPI-like-anchor amidated asparagine lipid modification. Positions 162–187 (STSNIPNFFAIFGFLVLIIFILGDKI) are cleaved as a propeptide — removed in mature form.

This sequence belongs to the ponticulin family. In terms of processing, the GPI-like-anchor contains a phosphoceramide group, rather than a phosphatidyl group.

It is found in the cell membrane. Binds F-actin and nucleates actin assembly. The protein is Ponticulin-like protein K (ponK) of Dictyostelium discoideum (Social amoeba).